The chain runs to 514 residues: Embryonic protein UVS.2 (514 aa).

The N-terminal stretch at 1–19 (MDVKISAILLACIIQYAVS) is a signal peptide. The 197-residue stretch at 90-286 (SAINDARFLW…SKINKLYECN (197 aa)) folds into the Peptidase M12A domain. Asn-112 is a glycosylation site (N-linked (GlcNAc...) asparagine). Cystine bridges form between Cys-137-Cys-285, Cys-158-Cys-178, Cys-288-Cys-314, Cys-340-Cys-363, Cys-402-Cys-428, and Cys-455-Cys-475. His-186 contributes to the Zn(2+) binding site. The active site involves Glu-187. His-190 and His-196 together coordinate Zn(2+). Asn-199 carries N-linked (GlcNAc...) asparagine glycosylation. 2 CUB domains span residues 288-400 (CSNL…YGSI) and 402-513 (CGGA…YTFV). N-linked (GlcNAc...) asparagine glycans are attached at residues Asn-421, Asn-427, and Asn-464.

Requires Zn(2+) as cofactor.

In Xenopus laevis (African clawed frog), this protein is Embryonic protein UVS.2.